A 206-amino-acid chain; its full sequence is MAEVEAAPIAAAETPEVAAAEGAAAAKAPHKLHRQWAFWYDIQSKPKPGAAWGTSLRKAYTFDTVEEFWGLYDQIFRPSKVTVNADFHLFKAGVEPKWEDPECANGGKWTVPCSRKTTLENMWLETLMALIGEQFDESEEICGVVASVRQRGDKLALWTRTASNEAVQVNIGKKWKEIVDYNDKMVYSFHDDAKREKPSRGGRYNV.

Cysteines 103 and 142 form a disulfide.

This sequence belongs to the eukaryotic initiation factor 4E family. In terms of assembly, EIF4F is a multi-subunit complex, the composition of which varies with external and internal environmental conditions. It is composed of at least EIF4A, EIF4E and EIF4G. EIF4E is also known to interact with other partners. In higher plants two isoforms of EIF4F have been identified, named isoform EIF4F and isoform EIF(iso)4F. Isoform EIF4F has subunits p220 and p26, whereas isoform EIF(iso)4F has subunits p82 and p28. According to the redox status, the Cys-103-Cys-142 disulfide bridge may have a role in regulating protein function by affecting its ability to bind capped mRNA.

Recognizes and binds the 7-methylguanosine-containing mRNA cap during an early step in the initiation of protein synthesis and facilitates ribosome binding by inducing the unwinding of the mRNAs secondary structures. The protein is Eukaryotic translation initiation factor isoform 4E-2 of Oryza sativa subsp. japonica (Rice).